The sequence spans 169 residues: Protein-export protein SecB (169 aa).

It belongs to the SecB family. In terms of assembly, homotetramer, a dimer of dimers. One homotetramer interacts with 1 SecA dimer.

The protein resides in the cytoplasm. Functionally, one of the proteins required for the normal export of preproteins out of the cell cytoplasm. It is a molecular chaperone that binds to a subset of precursor proteins, maintaining them in a translocation-competent state. It also specifically binds to its receptor SecA. In Haemophilus influenzae (strain 86-028NP), this protein is Protein-export protein SecB.